A 325-amino-acid chain; its full sequence is Hydroxymethylglutaryl-CoA lyase, mitochondrial (325 aa).

A mitochondrion-targeting transit peptide spans 1–27 (MATVKKVLPRRLVGLATLRAVSTSSVG). Residues 33-300 (VKIVEVGPRD…HTGVNLQKLL (268 aa)) enclose the Pyruvate carboxyltransferase domain. A substrate-binding site is contributed by Arg41. Asp42 contributes to the a divalent metal cation binding site. N6-acetyllysine; alternate is present on Lys48. N6-succinyllysine; alternate is present on Lys48. Lys111 bears the N6-acetyllysine mark. Lys137 and Lys179 each carry N6-acetyllysine; alternate. 2 positions are modified to N6-succinyllysine; alternate: Lys137 and Lys179. A divalent metal cation contacts are provided by His233 and His235. Cys266 is an active-site residue. Asn275 is a binding site for a divalent metal cation. The Microbody targeting signal motif lies at 323 to 325 (CKL). Lys324 is modified (N6-acetyllysine).

It belongs to the HMG-CoA lyase family. Homodimer; disulfide-linked. Can also form homotetramers.

It is found in the mitochondrion matrix. The protein localises to the peroxisome. It carries out the reaction (3S)-3-hydroxy-3-methylglutaryl-CoA = acetoacetate + acetyl-CoA. It functions in the pathway metabolic intermediate metabolism; (S)-3-hydroxy-3-methylglutaryl-CoA degradation; acetoacetate from (S)-3-hydroxy-3-methylglutaryl-CoA: step 1/1. Mitochondrial 3-hydroxy-3-methylglutaryl-CoA lyase that catalyzes a cation-dependent cleavage of (S)-3-hydroxy-3-methylglutaryl-CoA into acetyl-CoA and acetoacetate, a key step in ketogenesis. Terminal step in leucine catabolism. Ketone bodies (beta-hydroxybutyrate, acetoacetate and acetone) are essential as an alternative source of energy to glucose, as lipid precursors and as regulators of metabolism. The sequence is that of Hydroxymethylglutaryl-CoA lyase, mitochondrial (HMGCL) from Bos taurus (Bovine).